We begin with the raw amino-acid sequence, 329 residues long: Phosphate acyltransferase (329 aa).

Belongs to the PlsX family. As to quaternary structure, homodimer. Probably interacts with PlsY.

The protein localises to the cytoplasm. The catalysed reaction is a fatty acyl-[ACP] + phosphate = an acyl phosphate + holo-[ACP]. Its pathway is lipid metabolism; phospholipid metabolism. Catalyzes the reversible formation of acyl-phosphate (acyl-PO(4)) from acyl-[acyl-carrier-protein] (acyl-ACP). This enzyme utilizes acyl-ACP as fatty acyl donor, but not acyl-CoA. The polypeptide is Phosphate acyltransferase (Campylobacter fetus subsp. fetus (strain 82-40)).